Here is a 158-residue protein sequence, read N- to C-terminus: Large ribosomal subunit protein uL16 (158 aa).

It belongs to the universal ribosomal protein uL16 family. In terms of assembly, part of the 50S ribosomal subunit.

Its function is as follows. Binds 23S rRNA and is also seen to make contacts with the A and possibly P site tRNAs. This is Large ribosomal subunit protein uL16 from Synechococcus sp. (strain CC9902).